A 627-amino-acid polypeptide reads, in one-letter code: uncharacterized protein (627 aa).

The Extracellular portion of the chain corresponds to 1–32 (MVDDSNYLTPHETALAVVATAMKKARLQLDTL). Residues 33 to 53 (LINSILGGVLFSSGSFLLVAV) form a helical membrane-spanning segment. Residues 54 to 66 (YSEDPDIVARNPG) are Cytoplasmic-facing. Residues 67 to 87 (IVNLITGVNFAMGLFYVVMMG) traverse the membrane as a helical segment. The Extracellular portion of the chain corresponds to 88–113 (ADLFNSNILFFSVGVLRKAVTIYDLM). The chain crosses the membrane as a helical span at residues 114 to 134 (ISWVVSWLGNIAGSLFVSYLF). The Cytoplasmic portion of the chain corresponds to 135–165 (GHLSGISSQKLWIIGSRQIIEQKVSYSFVQT). Residues 166–186 (FLKGIACNFFVCLAIYLQLMA) form a helical membrane-spanning segment. Topologically, residues 187–192 (KPIHVK) are extracellular. A helical membrane pass occupies residues 193–213 (FILMSFPIIDFIGIGFTHVVG). Topologically, residues 214–218 (DMSAS) are cytoplasmic. Residues 219-239 (FIAMLNGANVSVGKYIWKLLI) form a helical membrane-spanning segment. The Extracellular segment spans residues 240 to 245 (PASLGN). Residues 246–266 (IVGGLFFSAVVPFYLHLVVVE) form a helical membrane-spanning segment. Residues 267–627 (RDRKRLSLPE…FYNRHTSPQL (361 aa)) are Cytoplasmic-facing. Position 305 is a phosphothreonine (Thr-305). A disordered region spans residues 512–537 (PPILPRTTQDTFPHNAPASSPAYTDD). Over residues 517–533 (RTTQDTFPHNAPASSPA) the composition is skewed to polar residues. A Phosphoserine modification is found at Ser-546. Thr-588 is subject to Phosphothreonine. The segment covering 605-614 (STTRRQKITE) has biased composition (basic and acidic residues). The tract at residues 605–627 (STTRRQKITEPKNFYNRHTSPQL) is disordered.

This sequence belongs to the FNT transporter (TC 1.A.16) family.

It localises to the membrane. This is an uncharacterized protein from Saccharomyces cerevisiae (strain ATCC 204508 / S288c) (Baker's yeast).